We begin with the raw amino-acid sequence, 547 residues long: Putative HMP/thiamine import ATP-binding protein YkoD (547 aa).

2 consecutive ABC transporter domains span residues 8-250 (LTVE…KLGI) and 295-523 (LEVS…KAKL). ATP contacts are provided by residues 42 to 49 (GPSGCGKS) and 327 to 334 (GPNGTGKS).

The protein belongs to the ABC transporter superfamily. The complex is composed of two ATP-binding proteins (YkoD), two transmembrane proteins (YkoC and YkoE) and a solute-binding protein (YkoF).

The protein resides in the cell membrane. In terms of biological role, part of the ABC transporter complex YkoCDEF that could transport hydroxymethylpyrimidine (HMP) and/or thiamine. Could also transport other HMP-containing products. Responsible for energy coupling to the transport system. This is Putative HMP/thiamine import ATP-binding protein YkoD (ykoD) from Bacillus subtilis (strain 168).